A 354-amino-acid chain; its full sequence is Holliday junction branch migration complex subunit RuvB (354 aa).

Residues 1-24 (MSIQTDDFAPVPPPKRVVSAAPTS) are disordered. Positions 5–195 (TDDFAPVPPP…FGIVARLEFY (191 aa)) are large ATPase domain (RuvB-L). ATP-binding positions include L34, R35, G76, K79, T80, T81, 142 to 144 (EDY), R185, Y195, and R232. Mg(2+) is bound at residue T80. Residues 196–266 (TPEELSRIVT…IAQRALAMLD (71 aa)) are small ATPAse domain (RuvB-S). The interval 269 to 354 (PQGFDVMDRK…RQHTDLFGPA (86 aa)) is head domain (RuvB-H). Positions 324 and 329 each coordinate DNA.

This sequence belongs to the RuvB family. In terms of assembly, homohexamer. Forms an RuvA(8)-RuvB(12)-Holliday junction (HJ) complex. HJ DNA is sandwiched between 2 RuvA tetramers; dsDNA enters through RuvA and exits via RuvB. An RuvB hexamer assembles on each DNA strand where it exits the tetramer. Each RuvB hexamer is contacted by two RuvA subunits (via domain III) on 2 adjacent RuvB subunits; this complex drives branch migration. In the full resolvosome a probable DNA-RuvA(4)-RuvB(12)-RuvC(2) complex forms which resolves the HJ.

Its subcellular location is the cytoplasm. It catalyses the reaction ATP + H2O = ADP + phosphate + H(+). Its function is as follows. The RuvA-RuvB-RuvC complex processes Holliday junction (HJ) DNA during genetic recombination and DNA repair, while the RuvA-RuvB complex plays an important role in the rescue of blocked DNA replication forks via replication fork reversal (RFR). RuvA specifically binds to HJ cruciform DNA, conferring on it an open structure. The RuvB hexamer acts as an ATP-dependent pump, pulling dsDNA into and through the RuvAB complex. RuvB forms 2 homohexamers on either side of HJ DNA bound by 1 or 2 RuvA tetramers; 4 subunits per hexamer contact DNA at a time. Coordinated motions by a converter formed by DNA-disengaged RuvB subunits stimulates ATP hydrolysis and nucleotide exchange. Immobilization of the converter enables RuvB to convert the ATP-contained energy into a lever motion, pulling 2 nucleotides of DNA out of the RuvA tetramer per ATP hydrolyzed, thus driving DNA branch migration. The RuvB motors rotate together with the DNA substrate, which together with the progressing nucleotide cycle form the mechanistic basis for DNA recombination by continuous HJ branch migration. Branch migration allows RuvC to scan DNA until it finds its consensus sequence, where it cleaves and resolves cruciform DNA. This Paracidovorax citrulli (strain AAC00-1) (Acidovorax citrulli) protein is Holliday junction branch migration complex subunit RuvB.